A 234-amino-acid chain; its full sequence is Ribonuclease Trv (234 aa).

5 disulfide bridges follow: C5-C24, C13-C59, C23-C125, C67-C117, and C189-C224. N-linked (GlcNAc...) asparagine glycosylation is present at N15. The active site involves H52. N-linked (GlcNAc...) asparagine glycosylation is present at N75. Residues E110 and H114 contribute to the active site.

This sequence belongs to the RNase T2 family.

It carries out the reaction a ribonucleotidyl-ribonucleotide-RNA + H2O = a 3'-end 3'-phospho-ribonucleotide-RNA + a 5'-end dephospho-ribonucleoside-RNA + H(+). Functionally, this is a base non-specific and adenylic acid preferential ribonuclease. In Hypocrea rufa (Trichoderma viride), this protein is Ribonuclease Trv.